Reading from the N-terminus, the 216-residue chain is Cytidylate kinase (216 aa).

7–15 (GPSGTGKST) lines the ATP pocket.

This sequence belongs to the cytidylate kinase family. Type 1 subfamily.

The protein resides in the cytoplasm. The enzyme catalyses CMP + ATP = CDP + ADP. It catalyses the reaction dCMP + ATP = dCDP + ADP. This chain is Cytidylate kinase, found in Chlamydia felis (strain Fe/C-56) (Chlamydophila felis).